The primary structure comprises 314 residues: Olfactory receptor 1C1 (314 aa).

Residues 1-25 are Extracellular-facing; sequence MEKRNLTVVREFVLLGLPSSAEQQH. The helical transmembrane segment at 26-49 threads the bilayer; that stretch reads LLSVLFLCMYLATTLGNMLIIATI. The Cytoplasmic portion of the chain corresponds to 50-57; it reads GFDSHLHS. Residues 58 to 79 form a helical membrane-spanning segment; the sequence is PMYFFLSNLAFVDICFTSTTVP. At 80–100 the chain is on the extracellular side; that stretch reads QMVVNILTGTKTISFAGCLTQ. A disulfide bond links cysteine 97 and cysteine 189. A helical membrane pass occupies residues 101–120; it reads LFFFVSFVNMDSLLLCVMAY. Residues 121 to 139 lie on the Cytoplasmic side of the membrane; that stretch reads DRYVAICHPLHYTARMNLC. Residues 140–158 form a helical membrane-spanning segment; that stretch reads LCVQLVAGLWLVTYLHALL. Topologically, residues 159–195 are extracellular; the sequence is HTVLIAQLSFCASNIIHHFFCDLNPLLQLSCSDVSFN. The helical transmembrane segment at 196-219 threads the bilayer; the sequence is VMIIFAVGGLLALTPLVCILVSYG. The Cytoplasmic segment spans residues 220-236; it reads LIFSTVLKITSTQGKQR. A helical transmembrane segment spans residues 237 to 259; sequence AVSTCSCHLSVVVLFYGTAIAVY. Residues 260-272 lie on the Extracellular side of the membrane; it reads FSPSSPHMPESDT. A helical transmembrane segment spans residues 273 to 292; it reads LSTIMYSMVAPMLNPFIYTL. The Cytoplasmic portion of the chain corresponds to 293-314; the sequence is RNRDMKRGLQKMLLKCTVFQQQ.

It belongs to the G-protein coupled receptor 1 family.

The protein localises to the cell membrane. In terms of biological role, odorant receptor. This Homo sapiens (Human) protein is Olfactory receptor 1C1 (OR1C1).